The sequence spans 344 residues: Ferrochelatase (344 aa).

The Fe cation site is built by His214 and Glu295.

It belongs to the ferrochelatase family.

The protein localises to the cytoplasm. The catalysed reaction is heme b + 2 H(+) = protoporphyrin IX + Fe(2+). It participates in porphyrin-containing compound metabolism; protoheme biosynthesis; protoheme from protoporphyrin-IX: step 1/1. In terms of biological role, catalyzes the ferrous insertion into protoporphyrin IX. The sequence is that of Ferrochelatase from Rhizobium johnstonii (strain DSM 114642 / LMG 32736 / 3841) (Rhizobium leguminosarum bv. viciae).